The following is a 370-amino-acid chain: GTPase Obg (370 aa).

The Obg domain occupies 1–159 (MKFIDEARIE…RMLRLELKVL (159 aa)). One can recognise an OBG-type G domain in the interval 160–334 (ADVGLLGMPN…LCYAIYDYLA (175 aa)). Residues 166-173 (GMPNAGKS), 191-195 (FTTLA), 213-216 (DIPG), 284-287 (NKLD), and 315-317 (SAL) each bind GTP. Positions 173 and 193 each coordinate Mg(2+). Residues 344 to 370 (EEEDLATDVRFRDAPPADGGATPGGDA) are disordered.

The protein belongs to the TRAFAC class OBG-HflX-like GTPase superfamily. OBG GTPase family. Monomer. Mg(2+) is required as a cofactor.

The protein localises to the cytoplasm. In terms of biological role, an essential GTPase which binds GTP, GDP and possibly (p)ppGpp with moderate affinity, with high nucleotide exchange rates and a fairly low GTP hydrolysis rate. Plays a role in control of the cell cycle, stress response, ribosome biogenesis and in those bacteria that undergo differentiation, in morphogenesis control. This is GTPase Obg from Burkholderia ambifaria (strain MC40-6).